The following is a 176-amino-acid chain: MSRIDTPAASRMQTIARNPVMIALVMTLALAGCASKKNLPNDAAGLGLGAGAATPGSQQDFTVNVGDRIFFDTDSTSIRADAQATLDRQAQWLAKYPNYGITIEGHADERGTREYNLALGARRAAATRDYLVSRGVPGNRMRTISYGKEKPVAVCDDISCWSQNRRAVTVLGGAGS.

The signal sequence occupies residues 1–32 (MSRIDTPAASRMQTIARNPVMIALVMTLALAG). The N-palmitoyl cysteine moiety is linked to residue Cys33. Cys33 carries S-diacylglycerol cysteine lipidation. Residues 58 to 175 (QQDFTVNVGD…RAVTVLGGAG (118 aa)) form the OmpA-like domain.

It belongs to the Pal lipoprotein family. The Tol-Pal system is composed of five core proteins: the inner membrane proteins TolA, TolQ and TolR, the periplasmic protein TolB and the outer membrane protein Pal. They form a network linking the inner and outer membranes and the peptidoglycan layer.

The protein resides in the cell outer membrane. Its function is as follows. Part of the Tol-Pal system, which plays a role in outer membrane invagination during cell division and is important for maintaining outer membrane integrity. This Rhizobium meliloti (strain 1021) (Ensifer meliloti) protein is Peptidoglycan-associated lipoprotein.